The chain runs to 249 residues: uncharacterized protein (249 aa).

The protein resides in the cytoplasm. It is found in the nucleus. This is an uncharacterized protein from Schizosaccharomyces pombe (strain 972 / ATCC 24843) (Fission yeast).